Reading from the N-terminus, the 126-residue chain is Large ribosomal subunit protein uL22 (126 aa).

Belongs to the universal ribosomal protein uL22 family. Part of the 50S ribosomal subunit.

This protein binds specifically to 23S rRNA; its binding is stimulated by other ribosomal proteins, e.g. L4, L17, and L20. It is important during the early stages of 50S assembly. It makes multiple contacts with different domains of the 23S rRNA in the assembled 50S subunit and ribosome. Functionally, the globular domain of the protein is located near the polypeptide exit tunnel on the outside of the subunit, while an extended beta-hairpin is found that lines the wall of the exit tunnel in the center of the 70S ribosome. The protein is Large ribosomal subunit protein uL22 of Dinoroseobacter shibae (strain DSM 16493 / NCIMB 14021 / DFL 12).